The following is a 1018-amino-acid chain: Isoleucine--tRNA ligase (1018 aa).

Positions 43-53 (PYTTGRIHLGT) match the 'HIGH' region motif. Residues 586 to 590 (KMSKS) carry the 'KMSKS' region motif. Lys-589 is a binding site for ATP.

The protein belongs to the class-I aminoacyl-tRNA synthetase family. IleS type 2 subfamily. As to quaternary structure, monomer. Requires Zn(2+) as cofactor.

The protein resides in the cytoplasm. The catalysed reaction is tRNA(Ile) + L-isoleucine + ATP = L-isoleucyl-tRNA(Ile) + AMP + diphosphate. Catalyzes the attachment of isoleucine to tRNA(Ile). As IleRS can inadvertently accommodate and process structurally similar amino acids such as valine, to avoid such errors it has two additional distinct tRNA(Ile)-dependent editing activities. One activity is designated as 'pretransfer' editing and involves the hydrolysis of activated Val-AMP. The other activity is designated 'posttransfer' editing and involves deacylation of mischarged Val-tRNA(Ile). The polypeptide is Isoleucine--tRNA ligase (Archaeoglobus fulgidus (strain ATCC 49558 / DSM 4304 / JCM 9628 / NBRC 100126 / VC-16)).